We begin with the raw amino-acid sequence, 401 residues long: Adaptive-response sensory kinase SasA (401 aa).

The Histidine kinase domain occupies M175–P400. H178 carries the phosphohistidine; by autocatalysis modification.

In terms of assembly, homooligomerizes. Interacts with KaiC. Participates in the KaiABC clock complex, whose core is composed of a KaiC homohexamer, 6 KaiB and up to 6 KaiA dimers. SasA and KaiB(fs) compete to bind to KaiC.

The enzyme catalyses ATP + protein L-histidine = ADP + protein N-phospho-L-histidine.. Its function is as follows. Member of the two-component regulatory system SasA/RpaA involved in genome-wide circadian gene expression. One of several clock output pathways. Participates in the Kai clock protein complex, the main circadian regulator in cyanobacteria, via its interaction with KaiC. KaiC enhances the autophosphorylation activity of SasA, which then transfers its phosphate group to RpaA to activate it. In addition to its output function, recruits fold-shifted KaiB (KaiB(fs)) to KaiC to cooperatively form the KaiB(6):KaiC(6) complex (independent of SasA kinase activity). Required for robustness of the circadian rhythm of gene expression and is involved in clock output, also required for adaptation to light/dark cycles. The chain is Adaptive-response sensory kinase SasA from Nostoc sp. (strain PCC 7120 / SAG 25.82 / UTEX 2576).